Reading from the N-terminus, the 420-residue chain is Tryptophan synthase beta chain (420 aa).

At lysine 112 the chain carries N6-(pyridoxal phosphate)lysine.

Belongs to the TrpB family. As to quaternary structure, tetramer of two alpha and two beta chains. The cofactor is pyridoxal 5'-phosphate.

It carries out the reaction (1S,2R)-1-C-(indol-3-yl)glycerol 3-phosphate + L-serine = D-glyceraldehyde 3-phosphate + L-tryptophan + H2O. It functions in the pathway amino-acid biosynthesis; L-tryptophan biosynthesis; L-tryptophan from chorismate: step 5/5. The beta subunit is responsible for the synthesis of L-tryptophan from indole and L-serine. The chain is Tryptophan synthase beta chain from Thermosipho africanus (strain TCF52B).